Here is a 386-residue protein sequence, read N- to C-terminus: Alkanesulfonate monooxygenase (386 aa).

This sequence belongs to the SsuD family.

It catalyses the reaction an alkanesulfonate + FMNH2 + O2 = an aldehyde + FMN + sulfite + H2O + 2 H(+). Catalyzes the desulfonation of aliphatic sulfonates. The protein is Alkanesulfonate monooxygenase of Paraburkholderia phytofirmans (strain DSM 17436 / LMG 22146 / PsJN) (Burkholderia phytofirmans).